A 276-amino-acid polypeptide reads, in one-letter code: Aurora kinase C (276 aa).

Residues 16–266 (FEIGRPLGRG…LAQVLKHPWV (251 aa)) form the Protein kinase domain. ATP contacts are provided by residues 22 to 30 (LGRGKFGRV) and Lys-45. The active-site Proton acceptor is Asp-139. Thr-171 is modified (phosphothreonine; by PKA).

Belongs to the protein kinase superfamily. Ser/Thr protein kinase family. Aurora subfamily. As to quaternary structure, component of the chromosomal passenger complex (CPC) composed of at least BIRC5/survivin, CDCA8/borealin, INCENP, AURKB or AURKC; predominantly independent AURKB- and AURKC-containing complexes exist; in the complex interacts directly with BIRC5/survivin and INCENP. Interacts with TACC1. Expressed only in testis.

It is found in the nucleus. It localises to the chromosome. The protein localises to the centromere. The protein resides in the cytoplasm. Its subcellular location is the cytoskeleton. It is found in the spindle. It catalyses the reaction L-seryl-[protein] + ATP = O-phospho-L-seryl-[protein] + ADP + H(+). The enzyme catalyses L-threonyl-[protein] + ATP = O-phospho-L-threonyl-[protein] + ADP + H(+). With respect to regulation, okadaic acid, an inhibitor of protein phosphatase 1 (PP1), protein phosphatase 2A (PP2A) and protein phosphatase 5 (PP5), increases AURKC activity. AURKC is also stabilized through its interaction with INCENP, which also acts as an activator. Serine/threonine-protein kinase component of the chromosomal passenger complex (CPC), a complex that acts as a key regulator of mitosis. The CPC complex has essential functions at the centromere in ensuring correct chromosome alignment and segregation and is required for chromatin-induced microtubule stabilization and spindle assembly. Also plays a role in meiosis and more particularly in spermatogenesis. Has redundant cellular functions with AURKB and can rescue an AURKB knockdown. Like AURKB, AURKC phosphorylates histone H3 at 'Ser-10' and 'Ser-28'. AURKC phosphorylates the CPC complex subunits BIRC5/survivin and INCENP leading to increased AURKC activity. Phosphorylates TACC1, another protein involved in cell division, at 'Ser-228'. The polypeptide is Aurora kinase C (Aurkc) (Mus musculus (Mouse)).